Here is a 1040-residue protein sequence, read N- to C-terminus: Putative protein tag-76 (1040 aa).

Over residues Met-1–Leu-15 the composition is skewed to polar residues. 2 disordered regions span residues Met-1–Ser-61 and Arg-322–Asn-367. Low complexity predominate over residues Thr-16 to Ser-32. Residues Arg-33 to Pro-50 are compositionally biased toward polar residues. Gly residues predominate over residues Gly-333 to Gly-356. In terms of domain architecture, PAZ spans Phe-379–Ser-486. The Piwi domain maps to Cys-660–Lys-966.

In Caenorhabditis elegans, this protein is Putative protein tag-76 (tag-76).